A 492-amino-acid chain; its full sequence is MGRKKIQITRIMDERNRQVTFTKRKFGLMKKAYELSVLCDCEIALIIFNSSNKLFQYASTDMDKVLLKYTEYNEPHESRTNSDIVEALNKKEHRGCDSPDPDTSYVLTPHTEEKYKKINEEFDNMMRNHKIAPGLPPQNFSMSVTVPVTSPSALSYTNPGSSLVSPSLAASSALADTSMLSPPQATLHRNVSPGAPQRPPSTGSAGGMLSTSDLTVPNGAGSSPVGNGFVNSRASPNLIGTTGANSLGKVMPTKSPPPPGGGSLGMNSRKPDLRVVIPPSSKGMMPPLNTQRISSSQATQPLATPVVSVTTPSLPPQGLVYSAMPTAYNTDYSLTSADLSALQGFNSPGMLSLGQVSAWQQHHLGQAALNSLVAGGQLSQGSNLSINTNQNINIKSEPISPPRDRMTPSGFQQQQQPQPPPPPPQAPQPQPRQEVGRSPVDSLSSSSSSYDGSDREDPRGDFHSPVVLGRPPNSEDRESPSVKRMRMDAWVT.

Residues 3–57 (RKKIQITRIMDERNRQVTFTKRKFGLMKKAYELSVLCDCEIALIIFNSSNKLFQY) form the MADS-box domain. The mef2-type DNA-binding region spans 58–86 (ASTDMDKVLLKYTEYNEPHESRTNSDIVE). At Ser-59 the chain carries Phosphoserine; by CK2. Ser-98 is subject to Phosphoserine. The interval 183–227 (PQATLHRNVSPGAPQRPPSTGSAGGMLSTSDLTVPNGAGSSPVGN) is disordered. The segment covering 209-227 (LSTSDLTVPNGAGSSPVGN) has biased composition (polar residues). A Phosphoserine modification is found at Ser-235. The disordered stretch occupies residues 242-270 (TGANSLGKVMPTKSPPPPGGGSLGMNSRK). Lys-249 is subject to N6-acetyllysine. Ser-255 carries the post-translational modification Phosphoserine. The required for interaction with MAPKs stretch occupies residues 266–283 (MNSRKPDLRVVIPPSSKG). 2 positions are modified to phosphothreonine; by MAPK7 and MAPK14: Thr-304 and Thr-311. Ser-347 bears the Phosphoserine; by MAPK7 mark. Positions 382–394 (SNLSINTNQNINI) are enriched in polar residues. Positions 382–492 (SNLSINTNQN…KRMRMDAWVT (111 aa)) are disordered. Lys-395 carries the post-translational modification N6-acetyllysine; alternate. Lys-395 is covalently cross-linked (Glycyl lysine isopeptide (Lys-Gly) (interchain with G-Cter in SUMO); alternate). Phosphoserine; by CDK5 is present on Ser-400. Thr-407 carries the post-translational modification Phosphothreonine. Pro residues predominate over residues 417-430 (PQPPPPPPQAPQPQ). At Ser-438 the chain carries Phosphoserine; by MAPK. Residues 438 to 451 (SPVDSLSSSSSSYD) show a composition bias toward low complexity. Basic and acidic residues-rich tracts occupy residues 452–462 (GSDREDPRGDF) and 473–492 (NSED…AWVT).

Binds DNA as a homo- or heterodimer. Dimerizes with MEF2D. Interacts with HDAC7. Interacts with PIAS1; the interaction enhances sumoylation. Interacts with HDAC4, HDAC9 and SLC2A4RG. Interacts (via the N-terminal) with MAPK7; the interaction results in the phosphorylation and transcriptional activity of MEF2A. Post-translationally, constitutive phosphorylation on Ser-400 promotes Lys-395 sumoylation thus preventing acetylation at this site. Dephosphorylation on Ser-400 by PPP3CA upon neuron depolarization promotes a switch from sumoylation to acetylation on residue Lys-395 leading to inhibition of dendrite claw differentiation. Phosphorylation on Thr-304 and Thr-311 are the main sites involved in p38 MAPK signaling and activate transcription. Phosphorylated on these sites by MAPK14/p38alpha and MAPK11/p38beta, but not by MAPK13/p38delta nor by MAPK12/p38gamma. Phosphorylation on Ser-400 by CDK5 induced by neurotoxicity inhibits MEF2A transcriptional activation leading to apoptosis of cortical neurons. Phosphorylation on Thr-304, Thr-311 and Ser-347 can be induced by EGF. Sumoylation on Lys-395 is enhanced by PIAS1 and represses transcriptional activity. Phosphorylation on Ser-400 is required for sumoylation. Has no effect on nuclear location nor on DNA binding. Sumoylated with SUMO1 and, to a lesser extent with SUMO2 and SUMO3. PIASx facilitates sumoylation in postsynaptic dendrites in the cerebellar cortex and promotes their morphogenesis. In terms of processing, acetylation on Lys-395 activates transcriptional activity. Acetylated by p300 on several sites in diffentiating myocytes. Acetylation on Lys-4 increases DNA binding and transactivation. Hyperacetylation by p300 leads to enhanced cardiac myocyte growth and heart failure. Post-translationally, proteolytically cleaved in cerebellar granule neurons on several sites by caspase 3 and caspase 7 following neurotoxicity. Preferentially cleaves the CDK5-mediated hyperphosphorylated form which leads to neuron apoptosis and transcriptional inactivation.

The protein resides in the nucleus. Transcriptional activator which binds specifically to the MEF2 element, 5'-YTA[AT](4)TAR-3', found in numerous muscle-specific genes. Also involved in the activation of numerous growth factor- and stress-induced genes. Mediates cellular functions not only in skeletal and cardiac muscle development, but also in neuronal differentiation and survival. Plays diverse roles in the control of cell growth, survival and apoptosis via p38 MAPK signaling in muscle-specific and/or growth factor-related transcription. In cerebellar granule neurons, phosphorylated and sumoylated MEF2A represses transcription of NUR77 promoting synaptic differentiation. Associates with chromatin to the ZNF16 promoter. The chain is Myocyte-specific enhancer factor 2A (MEF2A) from Bos taurus (Bovine).